The primary structure comprises 2215 residues: Unconventional myosin-VIIa (2215 aa).

In terms of domain architecture, Myosin motor spans 65–741 (HGVEDMIRLG…HDMLLEVERD (677 aa)). 158–165 (GESGAGKT) lines the ATP pocket. Residues 632-639 (FVRCIKPN) are actin-binding. 5 IQ domains span residues 745–765 (TDRV…SNFL), 768–788 (KNAA…KNYG), 791–811 (RLGF…QQYR), 814–834 (RQRI…KAFR), and 837–857 (LWAV…RLHQ). The segment at 858–935 (RLRAEYLWRL…LEQMERARHE (78 aa)) is SAH. Residues 1017-1253 (YTRRPLKQPL…PSWLELQATK (237 aa)) form the MyTH4 1 domain. The 345-residue stretch at 1258-1602 (IMLPVTFMDG…LVVTFLEGLR (345 aa)) folds into the FERM 1 domain. Ser1569 carries the phosphoserine modification. Phosphothreonine is present on Thr1571. In terms of domain architecture, SH3 spans 1603–1672 (KRSKYVVALQ…PTDSVYVMPT (70 aa)). One can recognise a MyTH4 2 domain in the interval 1747–1896 (HTREPLKQAL…PHLVEVEAIQ (150 aa)). One can recognise an FERM 2 domain in the interval 1902 to 2205 (IFHKVYFPDD…SYISQMLTAM (304 aa)).

The protein belongs to the TRAFAC class myosin-kinesin ATPase superfamily. Myosin family. Might homodimerize in a two headed molecule through the formation of a coiled-coil rod. Identified in a complex with USH1C and USH1G. Interacts with MYRIP. Interacts with RPE65. Interacts with CIB2. May interact with CALM. Interacts with WHRN. Interacts with PLEKHB1 (via PH domain). Interacts with PCDH15. Interacts with TWF2. Interacts with USH1G. Interacts with MYH9. Interacts (via MyTH4-FERM domains) with cytoplasmic regions of ADGRV1 and USH2A. Interacts with PDZD7 (via MyTH4-FERM domains). Interacts with CALML4. Expressed in the pigment epithelium and the photoreceptor cells of the retina. Also found in kidney, liver, testis, cochlea, lymphocytes. Not expressed in brain.

The protein resides in the cytoplasm. It is found in the cell cortex. Its subcellular location is the cytoskeleton. It localises to the synapse. ATP hydrolysis is inhibited by Mg(2+), already at a concentration of 0.4 mM. In terms of biological role, myosins are actin-based motor molecules with ATPase activity. Unconventional myosins serve in intracellular movements. Their highly divergent tails bind to membranous compartments, which are then moved relative to actin filaments. In the retina, plays an important role in the renewal of the outer photoreceptor disks. Plays an important role in the distribution and migration of retinal pigment epithelial (RPE) melanosomes and phagosomes, and in the regulation of opsin transport in retinal photoreceptors. In the inner ear, plays an important role in differentiation, morphogenesis and organization of cochlear hair cell bundles. Involved in hair-cell vesicle trafficking of aminoglycosides, which are known to induce ototoxicity. Motor protein that is a part of the functional network formed by USH1C, USH1G, CDH23 and MYO7A that mediates mechanotransduction in cochlear hair cells. Required for normal hearing. The protein is Unconventional myosin-VIIa of Homo sapiens (Human).